The chain runs to 703 residues: Cyclomaltodextrin glucanotransferase (703 aa).

The first 29 residues, 1–29 (MNDLNDFLKTILLSFIFFLLLSLPTVAEA), serve as a signal peptide directing secretion. Residues 30-160 (DVTNKVNYSK…GIKVIMDFTP (131 aa)) form an A1 region. 4 residues coordinate Ca(2+): D52, N54, N57, and N58. C68 and C75 are joined by a disulfide. Residues G76 and D78 each coordinate Ca(2+). 122-123 (YW) is a binding site for substrate. N161 provides a ligand contact to Ca(2+). The tract at residues 161 to 224 (NHSSPALETN…NLYDLADYDL (64 aa)) is b. H162 is a substrate binding site. I212 is a binding site for Ca(2+). Residue 215–218 (NLYD) participates in substrate binding. D221 contacts Ca(2+). The A2 stretch occupies residues 225-428 (NNTVMDQYLK…LRQTNSALGY (204 aa)). Substrate is bound at residue R249. The active-site Nucleophile is the D251. 254 to 255 (KH) is a substrate binding site. Residue H255 coordinates Ca(2+). Residue E279 is the Proton donor of the active site. Substrate contacts are provided by H349, D393, and R397. Positions 429–516 (GTTTERWLNE…SVAVWQVSNP (88 aa)) are c. Residues 517–600 (STSPLIGQVG…SPTYKEFEVL (84 aa)) are d. An IPT/TIG domain is found at 520–598 (PLIGQVGPMM…IKSPTYKEFE (79 aa)). Residues 599–703 (VLSGNQVSVR…TGTDTVMINW (105 aa)) form the CBM20 domain. Positions 601-703 (SGNQVSVRFG…TGTDTVMINW (103 aa)) are e.

It belongs to the glycosyl hydrolase 13 family. In terms of assembly, monomer. Ca(2+) is required as a cofactor.

It localises to the secreted. The enzyme catalyses Cyclizes part of a (1-&gt;4)-alpha-D-glucan chain by formation of a (1-&gt;4)-alpha-D-glucosidic bond.. The polypeptide is Cyclomaltodextrin glucanotransferase (cgt) (Bacillus sp. (strain 1-1)).